The primary structure comprises 251 residues: Probable phosphatase Sputcn32_1369 (251 aa).

Zn(2+) is bound by residues His-8, His-10, His-16, His-41, Glu-74, His-102, His-132, Asp-193, and His-195.

The protein belongs to the PHP family. It depends on Zn(2+) as a cofactor.

The sequence is that of Probable phosphatase Sputcn32_1369 from Shewanella putrefaciens (strain CN-32 / ATCC BAA-453).